Consider the following 304-residue polypeptide: tRNA dimethylallyltransferase (304 aa).

2–9 contacts ATP; sequence GPTASGKT. Position 4-9 (4-9) interacts with substrate; the sequence is TASGKT. The interaction with substrate tRNA stretch occupies residues 28 to 31; that stretch reads DSAL.

Belongs to the IPP transferase family. In terms of assembly, monomer. Requires Mg(2+) as cofactor.

It catalyses the reaction adenosine(37) in tRNA + dimethylallyl diphosphate = N(6)-dimethylallyladenosine(37) in tRNA + diphosphate. In terms of biological role, catalyzes the transfer of a dimethylallyl group onto the adenine at position 37 in tRNAs that read codons beginning with uridine, leading to the formation of N6-(dimethylallyl)adenosine (i(6)A). The sequence is that of tRNA dimethylallyltransferase from Blochmanniella pennsylvanica (strain BPEN).